Consider the following 1158-residue polypeptide: ATP-dependent helicase/deoxyribonuclease subunit B (1158 aa).

The UvrD-like helicase ATP-binding domain maps to 1–275 (MTLHAYLGRA…QYFNQLYRFN (275 aa)). 8–15 (GRAGTGKS) contributes to the ATP binding site. The region spanning 269–583 (NQLYRFNNQD…SIGTMDLAKV (315 aa)) is the UvrD-like helicase C-terminal domain. [4Fe-4S] cluster is bound by residues cysteine 784, cysteine 1112, cysteine 1115, and cysteine 1121.

This sequence belongs to the helicase family. AddB/RexB type 1 subfamily. In terms of assembly, heterodimer of AddA and AddB. Mg(2+) is required as a cofactor. Requires [4Fe-4S] cluster as cofactor.

The heterodimer acts as both an ATP-dependent DNA helicase and an ATP-dependent, dual-direction single-stranded exonuclease. Recognizes the chi site generating a DNA molecule suitable for the initiation of homologous recombination. The AddB subunit has 5' -&gt; 3' nuclease activity but not helicase activity. The polypeptide is ATP-dependent helicase/deoxyribonuclease subunit B (Staphylococcus aureus (strain USA300)).